The primary structure comprises 609 residues: Sterol O-acyltransferase 2 (609 aa).

A compositionally biased stretch (polar residues) spans 1-15; that stretch reads MGRTNTSDQLNAISD. The disordered stretch occupies residues 1–41; it reads MGRTNTSDQLNAISDKNTKRKSLALDNEYHNNSSSEDDSSK. A run of 6 helical transmembrane segments spans residues 152-172, 195-215, 229-249, 253-273, 402-422, and 451-471; these read FFGM…NNLI, LFKV…AFFV, VGWW…LWIA, CLDF…VFIM, WSYV…MILI, and FLLM…FFLI. The FYXDWWN motif signature appears at 490 to 496; the sequence is FYGPWWS. 2 helical membrane passes run 534–554 and 589–609; these read AAII…YVIF and IICW…YLVF. Residue H546 is part of the active site.

It belongs to the membrane-bound acyltransferase family. Sterol o-acyltransferase subfamily.

It localises to the endoplasmic reticulum membrane. Its activity is regulated as follows. Inhibited by the protoberberine derivative HWY-289 in a non-competitive manner. Inhibited by miconazole. Not inhibited by CI-976, polyoxin D, amphotericin B or nikkomycin Z. Its function is as follows. Sterol O-acyltransferase that catalyzes the formation of stery esters. This chain is Sterol O-acyltransferase 2, found in Candida albicans (Yeast).